Here is a 239-residue protein sequence, read N- to C-terminus: DNA repair protein RecO (239 aa).

It belongs to the RecO family.

Involved in DNA repair and RecF pathway recombination. The chain is DNA repair protein RecO from Bifidobacterium animalis subsp. lactis (strain AD011).